The following is a 382-amino-acid chain: Cytochrome b (382 aa).

The next 4 membrane-spanning stretches (helical) occupy residues 33 to 53 (FGSLLGLCLASQIVTGLFLAM), 77 to 98 (WLVRNMHANGASFFFICLYTHI), 113 to 133 (WTVGVILLLLTMMTAFVGYVL), and 178 to 198 (FFAFHFLLPFVIAAFTAIHLL). Residues H83 and H97 each contribute to the heme b site. Positions 182 and 196 each coordinate heme b. H201 is an a ubiquinone binding site. The next 4 membrane-spanning stretches (helical) occupy residues 226–246 (LKDLLGFTILILTLTSVALLT), 288–308 (LGGVLALLASVLILATVPFLQ), 320–340 (LTQLVFWTLIANIAILTWIGG), and 347–367 (FVSIGQLASLAYFSIFLIIIP).

Belongs to the cytochrome b family. In terms of assembly, the cytochrome bc1 complex contains 3 respiratory subunits (MT-CYB, CYC1 and UQCRFS1), 2 core proteins (UQCRC1 and UQCRC2) and probably 6 low-molecular weight proteins. Heme b is required as a cofactor.

Its subcellular location is the mitochondrion inner membrane. Functionally, component of the ubiquinol-cytochrome c reductase complex (complex III or cytochrome b-c1 complex) that is part of the mitochondrial respiratory chain. The b-c1 complex mediates electron transfer from ubiquinol to cytochrome c. Contributes to the generation of a proton gradient across the mitochondrial membrane that is then used for ATP synthesis. The protein is Cytochrome b (mt-cyb) of Sigmops gracilis (Slender fangjaw).